Consider the following 556-residue polypeptide: Hydroxylamine reductase (556 aa).

The [4Fe-4S] cluster site is built by cysteine 5, cysteine 8, cysteine 17, and cysteine 23. Hybrid [4Fe-2O-2S] cluster contacts are provided by histidine 249, glutamate 273, cysteine 317, cysteine 409, cysteine 437, cysteine 462, glutamate 497, and lysine 499. Position 409 is a cysteine persulfide (cysteine 409).

The protein belongs to the HCP family. The cofactor is [4Fe-4S] cluster. It depends on hybrid [4Fe-2O-2S] cluster as a cofactor.

It is found in the cytoplasm. It catalyses the reaction A + NH4(+) + H2O = hydroxylamine + AH2 + H(+). Its function is as follows. Catalyzes the reduction of hydroxylamine to form NH(3) and H(2)O. The sequence is that of Hydroxylamine reductase from Kosmotoga olearia (strain ATCC BAA-1733 / DSM 21960 / TBF 19.5.1).